Consider the following 281-residue polypeptide: MSLYQGDKALEALSLGKETQYHTHYDASLLQGVPRRLNRDSLSLTADNLPFHGGDIWTMYELSWLNSQGLPQVAIGHVELDATTENLIESKSFKLYLNSFNQTRFENWHIVEETLLKDLTACAKGRVHLTLYPLSHFTSQPIVDFVGECIDNQPIEIDNYQFDSQWLNGSTTDTLVEETLVSHLLKSNCLITHQPDWGSVMIQYKGKKIDREKLLRYLVSFRQHNEFHEQCVERIFHDIMTFCSPDTLTVYARYTRRGGLDINPWRSNCEFVPETGRLARQ.

88–90 (IES) contributes to the substrate binding site. NADPH is bound at residue 90 to 91 (SK). Cys189 acts as the Thioimide intermediate in catalysis. Catalysis depends on Asp196, which acts as the Proton donor. A substrate-binding site is contributed by 228-229 (HE). An NADPH-binding site is contributed by 257 to 258 (RG).

Belongs to the GTP cyclohydrolase I family. QueF type 2 subfamily. As to quaternary structure, homodimer.

The protein localises to the cytoplasm. It catalyses the reaction 7-aminomethyl-7-carbaguanine + 2 NADP(+) = 7-cyano-7-deazaguanine + 2 NADPH + 3 H(+). It participates in tRNA modification; tRNA-queuosine biosynthesis. Its function is as follows. Catalyzes the NADPH-dependent reduction of 7-cyano-7-deazaguanine (preQ0) to 7-aminomethyl-7-deazaguanine (preQ1). This chain is NADPH-dependent 7-cyano-7-deazaguanine reductase, found in Proteus mirabilis (strain HI4320).